The primary structure comprises 178 residues: Inorganic pyrophosphatase (178 aa).

Residues Lys-30, Arg-44, and Tyr-56 each contribute to the substrate site. Mg(2+) contacts are provided by Asp-66, Asp-71, and Asp-103. Tyr-140 is a binding site for substrate.

The protein belongs to the PPase family. As to quaternary structure, homohexamer. Requires Mg(2+) as cofactor.

Its subcellular location is the cytoplasm. The catalysed reaction is diphosphate + H2O = 2 phosphate + H(+). Catalyzes the hydrolysis of inorganic pyrophosphate (PPi) forming two phosphate ions. The polypeptide is Inorganic pyrophosphatase (Pyrococcus horikoshii (strain ATCC 700860 / DSM 12428 / JCM 9974 / NBRC 100139 / OT-3)).